Reading from the N-terminus, the 435-residue chain is Methylenetetrahydrofolate--tRNA-(uracil-5-)-methyltransferase TrmFO (435 aa).

9–14 (GAGLAG) contacts FAD.

The protein belongs to the MnmG family. TrmFO subfamily. FAD serves as cofactor.

It localises to the cytoplasm. It catalyses the reaction uridine(54) in tRNA + (6R)-5,10-methylene-5,6,7,8-tetrahydrofolate + NADH + H(+) = 5-methyluridine(54) in tRNA + (6S)-5,6,7,8-tetrahydrofolate + NAD(+). The catalysed reaction is uridine(54) in tRNA + (6R)-5,10-methylene-5,6,7,8-tetrahydrofolate + NADPH + H(+) = 5-methyluridine(54) in tRNA + (6S)-5,6,7,8-tetrahydrofolate + NADP(+). Catalyzes the folate-dependent formation of 5-methyl-uridine at position 54 (M-5-U54) in all tRNAs. In Staphylococcus aureus (strain JH1), this protein is Methylenetetrahydrofolate--tRNA-(uracil-5-)-methyltransferase TrmFO.